Consider the following 558-residue polypeptide: Pyrethroid hydrolase Ces2a (558 aa).

The signal sequence occupies residues 1–26 (MPLARLPGWLCVVACGLLLLLQHVHG). The cysteines at positions 95 and 122 are disulfide-linked. Lys-209 is subject to N6-succinyllysine. Ser-227 acts as the Acyl-ester intermediate in catalysis. Asn-275 is a glycosylation site (N-linked (GlcNAc...) asparagine). A disulfide bond links Cys-279 and Cys-290. Lys-296 bears the N6-succinyllysine mark. Glu-344 functions as the Charge relay system in the catalytic mechanism. N-linked (GlcNAc...) asparagine glycosylation occurs at Asn-361. Catalysis depends on His-456, which acts as the Charge relay system.

Belongs to the type-B carboxylesterase/lipase family.

Its subcellular location is the microsome. It catalyses the reaction (-)-trans-permethrin + H2O = (3-phenoxyphenyl)methanol + (1S,3R)-3-(2,2-dichlorovinyl)-2,2-dimethylcyclopropanecarboxylate + H(+). It carries out the reaction all-trans-retinyl hexadecanoate + H2O = all-trans-retinol + hexadecanoate + H(+). Its function is as follows. Carboxylesterases that catalyzes the hydrolysis of pyrethroids pesticides. Hydrolyzes permethrin faster than cypermethrin. Hydrolyzes retinyl esters. The protein is Pyrethroid hydrolase Ces2a of Mus musculus (Mouse).